The chain runs to 419 residues: UDP-N-acetylglucosamine 1-carboxyvinyltransferase (419 aa).

23–24 contacts phosphoenolpyruvate; the sequence is KN. Position 92 (Arg92) interacts with UDP-N-acetyl-alpha-D-glucosamine. The active-site Proton donor is Cys116. Cys116 carries the 2-(S-cysteinyl)pyruvic acid O-phosphothioketal modification. UDP-N-acetyl-alpha-D-glucosamine is bound by residues 121–125, 161–164, Asp306, and Ile328; these read RPVDL and KVSV.

This sequence belongs to the EPSP synthase family. MurA subfamily.

The protein localises to the cytoplasm. It catalyses the reaction phosphoenolpyruvate + UDP-N-acetyl-alpha-D-glucosamine = UDP-N-acetyl-3-O-(1-carboxyvinyl)-alpha-D-glucosamine + phosphate. It functions in the pathway cell wall biogenesis; peptidoglycan biosynthesis. Cell wall formation. Adds enolpyruvyl to UDP-N-acetylglucosamine. In Vibrio cholerae serotype O1 (strain ATCC 39541 / Classical Ogawa 395 / O395), this protein is UDP-N-acetylglucosamine 1-carboxyvinyltransferase.